The sequence spans 123 residues: MPTIQQLVRKGRHSKKAKVATAGLKGSPQRRGVCTRVYTTTPKKPNSALRKVARVRLTSGIEVSAYIPGEGHNLQEHSMVLVRGGRVKDLPGVRYKIIRGALDTQGVKDRKQARSRYGAKKGQ.

Residues 1–31 (MPTIQQLVRKGRHSKKAKVATAGLKGSPQRR) form a disordered region. The segment covering 9–18 (RKGRHSKKAK) has biased composition (basic residues). Asp89 carries the post-translational modification 3-methylthioaspartic acid.

The protein belongs to the universal ribosomal protein uS12 family. In terms of assembly, part of the 30S ribosomal subunit. Contacts proteins S8 and S17. May interact with IF1 in the 30S initiation complex.

With S4 and S5 plays an important role in translational accuracy. Functionally, interacts with and stabilizes bases of the 16S rRNA that are involved in tRNA selection in the A site and with the mRNA backbone. Located at the interface of the 30S and 50S subunits, it traverses the body of the 30S subunit contacting proteins on the other side and probably holding the rRNA structure together. The combined cluster of proteins S8, S12 and S17 appears to hold together the shoulder and platform of the 30S subunit. This Corynebacterium aurimucosum (strain ATCC 700975 / DSM 44827 / CIP 107346 / CN-1) (Corynebacterium nigricans) protein is Small ribosomal subunit protein uS12.